The chain runs to 130 residues: Small ribosomal subunit protein uS8 (130 aa).

It belongs to the universal ribosomal protein uS8 family. Part of the 30S ribosomal subunit. Contacts proteins S5 and S12.

One of the primary rRNA binding proteins, it binds directly to 16S rRNA central domain where it helps coordinate assembly of the platform of the 30S subunit. The sequence is that of Small ribosomal subunit protein uS8 from Hahella chejuensis (strain KCTC 2396).